Consider the following 80-residue polypeptide: Large ribosomal subunit protein uL24 (80 aa).

The segment at 53 to 80 (HMRPTQGQTQGSIIEREFPIHSSNVKKS) is disordered.

The protein belongs to the universal ribosomal protein uL24 family. Part of the 50S ribosomal subunit.

One of two assembly initiator proteins, it binds directly to the 5'-end of the 23S rRNA, where it nucleates assembly of the 50S subunit. In terms of biological role, one of the proteins that surrounds the polypeptide exit tunnel on the outside of the subunit. The polypeptide is Large ribosomal subunit protein uL24 (Pelodictyon phaeoclathratiforme (strain DSM 5477 / BU-1)).